The primary structure comprises 369 residues: UDP-N-acetylglucosamine--N-acetylmuramyl-(pentapeptide) pyrophosphoryl-undecaprenol N-acetylglucosamine transferase (369 aa).

UDP-N-acetyl-alpha-D-glucosamine-binding positions include 15–17 (TGG), Asn126, Arg169, Ser197, and Gln299.

Belongs to the glycosyltransferase 28 family. MurG subfamily.

The protein localises to the cell inner membrane. It carries out the reaction di-trans,octa-cis-undecaprenyl diphospho-N-acetyl-alpha-D-muramoyl-L-alanyl-D-glutamyl-meso-2,6-diaminopimeloyl-D-alanyl-D-alanine + UDP-N-acetyl-alpha-D-glucosamine = di-trans,octa-cis-undecaprenyl diphospho-[N-acetyl-alpha-D-glucosaminyl-(1-&gt;4)]-N-acetyl-alpha-D-muramoyl-L-alanyl-D-glutamyl-meso-2,6-diaminopimeloyl-D-alanyl-D-alanine + UDP + H(+). It functions in the pathway cell wall biogenesis; peptidoglycan biosynthesis. Its function is as follows. Cell wall formation. Catalyzes the transfer of a GlcNAc subunit on undecaprenyl-pyrophosphoryl-MurNAc-pentapeptide (lipid intermediate I) to form undecaprenyl-pyrophosphoryl-MurNAc-(pentapeptide)GlcNAc (lipid intermediate II). This chain is UDP-N-acetylglucosamine--N-acetylmuramyl-(pentapeptide) pyrophosphoryl-undecaprenol N-acetylglucosamine transferase, found in Methylobacterium radiotolerans (strain ATCC 27329 / DSM 1819 / JCM 2831 / NBRC 15690 / NCIMB 10815 / 0-1).